A 301-amino-acid chain; its full sequence is Ornithine carbamoyltransferase (301 aa).

Residues R100 and 127 to 130 contribute to the carbamoyl phosphate site; that span reads HPCQ. Residues N158, D221, and 225 to 226 each bind L-ornithine; that span reads SM. C260 and R288 together coordinate carbamoyl phosphate.

Belongs to the aspartate/ornithine carbamoyltransferase superfamily. OTCase family. As to quaternary structure, the enzyme is present as a mixture of trimers and dodecamers, with the relative proportions of the two forms depending on the salt concentration. In addition, the trimeric fraction could reassociate into dodecamers when the salt concentration is increased. It appears that in vivo, the main fraction is in the dodecameric form.

It is found in the cytoplasm. It carries out the reaction carbamoyl phosphate + L-ornithine = L-citrulline + phosphate + H(+). The protein operates within amino-acid biosynthesis; L-arginine biosynthesis; L-arginine from L-ornithine and carbamoyl phosphate: step 1/3. Inhibited by excess of arginine and by the bisubstrate delta-N-phosphonoacetyl-L-ornithine (PALO). Its function is as follows. Reversibly catalyzes the transfer of the carbamoyl group from carbamoyl phosphate (CP) to the N(epsilon) atom of ornithine (ORN) to produce L-citrulline, which is a substrate for argininosuccinate synthetase, the enzyme involved in the final step in arginine biosynthesis. The protein is Ornithine carbamoyltransferase of Moritella abyssi.